A 439-amino-acid polypeptide reads, in one-letter code: ATP-dependent protease ATPase subunit HslU (439 aa).

ATP is bound by residues Ile-17, 59-64, Asp-251, Glu-317, and Arg-389; that span reads GVGKTE.

The protein belongs to the ClpX chaperone family. HslU subfamily. A double ring-shaped homohexamer of HslV is capped on each side by a ring-shaped HslU homohexamer. The assembly of the HslU/HslV complex is dependent on binding of ATP.

Its subcellular location is the cytoplasm. Functionally, ATPase subunit of a proteasome-like degradation complex; this subunit has chaperone activity. The binding of ATP and its subsequent hydrolysis by HslU are essential for unfolding of protein substrates subsequently hydrolyzed by HslV. HslU recognizes the N-terminal part of its protein substrates and unfolds these before they are guided to HslV for hydrolysis. This is ATP-dependent protease ATPase subunit HslU from Campylobacter jejuni subsp. doylei (strain ATCC BAA-1458 / RM4099 / 269.97).